Here is a 203-residue protein sequence, read N- to C-terminus: Recombination protein RecR (203 aa).

The C4-type zinc finger occupies C57–C72. The Toprim domain occupies G80–P175.

It belongs to the RecR family.

May play a role in DNA repair. It seems to be involved in an RecBC-independent recombinational process of DNA repair. It may act with RecF and RecO. The sequence is that of Recombination protein RecR from Chromohalobacter salexigens (strain ATCC BAA-138 / DSM 3043 / CIP 106854 / NCIMB 13768 / 1H11).